A 447-amino-acid polypeptide reads, in one-letter code: Ribosomal protein uS12 methylthiotransferase RimO (447 aa).

An MTTase N-terminal domain is found at Pro-4–Pro-114. [4Fe-4S] cluster-binding residues include Cys-13, Cys-49, Cys-78, Cys-147, Cys-151, and Cys-154. The region spanning Leu-133–Ala-370 is the Radical SAM core domain. The TRAM domain occupies Gln-373 to Lys-443.

The protein belongs to the methylthiotransferase family. RimO subfamily. [4Fe-4S] cluster is required as a cofactor.

It is found in the cytoplasm. It carries out the reaction L-aspartate(89)-[ribosomal protein uS12]-hydrogen + (sulfur carrier)-SH + AH2 + 2 S-adenosyl-L-methionine = 3-methylsulfanyl-L-aspartate(89)-[ribosomal protein uS12]-hydrogen + (sulfur carrier)-H + 5'-deoxyadenosine + L-methionine + A + S-adenosyl-L-homocysteine + 2 H(+). Catalyzes the methylthiolation of an aspartic acid residue of ribosomal protein uS12. This chain is Ribosomal protein uS12 methylthiotransferase RimO, found in Acinetobacter baumannii (strain AB307-0294).